Consider the following 357-residue polypeptide: UDP-N-acetylglucosamine--N-acetylmuramyl-(pentapeptide) pyrophosphoryl-undecaprenol N-acetylglucosamine transferase (357 aa).

UDP-N-acetyl-alpha-D-glucosamine-binding positions include 14-16 (TGG), N120, R164, S194, and Q291.

Belongs to the glycosyltransferase 28 family. MurG subfamily.

The protein resides in the cell inner membrane. It carries out the reaction di-trans,octa-cis-undecaprenyl diphospho-N-acetyl-alpha-D-muramoyl-L-alanyl-D-glutamyl-meso-2,6-diaminopimeloyl-D-alanyl-D-alanine + UDP-N-acetyl-alpha-D-glucosamine = di-trans,octa-cis-undecaprenyl diphospho-[N-acetyl-alpha-D-glucosaminyl-(1-&gt;4)]-N-acetyl-alpha-D-muramoyl-L-alanyl-D-glutamyl-meso-2,6-diaminopimeloyl-D-alanyl-D-alanine + UDP + H(+). It participates in cell wall biogenesis; peptidoglycan biosynthesis. Cell wall formation. Catalyzes the transfer of a GlcNAc subunit on undecaprenyl-pyrophosphoryl-MurNAc-pentapeptide (lipid intermediate I) to form undecaprenyl-pyrophosphoryl-MurNAc-(pentapeptide)GlcNAc (lipid intermediate II). The chain is UDP-N-acetylglucosamine--N-acetylmuramyl-(pentapeptide) pyrophosphoryl-undecaprenol N-acetylglucosamine transferase from Fusobacterium nucleatum subsp. nucleatum (strain ATCC 25586 / DSM 15643 / BCRC 10681 / CIP 101130 / JCM 8532 / KCTC 2640 / LMG 13131 / VPI 4355).